The sequence spans 987 residues: Pentatricopeptide repeat-containing protein At1g06710, mitochondrial (987 aa).

Residues 1–42 (MNKTVVRCLLSRSHHPLIHFSTNLSLLHRVFTCSRYLTARFM) constitute a mitochondrion transit peptide. 22 PPR repeats span residues 164-198 (TAPV…DKEV), 199-233 (FGEF…RFRP), 234-268 (SRST…NLRM), 269-299 (DGFT…ENFV), 301-335 (DTVF…SCLP), 336-370 (NVVT…GCYP), 371-405 (SPKI…GHMP), 406-446 (GYVV…GVVL), 447-481 (NKIN…GFIP), 482-516 (DTST…GLVA), 517-551 (DVYT…GCTP), 552-586 (NVVT…GCLP), 587-621 (NIVT…KDVP), 638-672 (NVVT…GCEP), 673-707 (NQIV…GFPA), 708-742 (TLYT…SCAP), 743-777 (NVVI…GCQP), 778-812 (NVVT…GVAP), 813-847 (NYVT…HWPT), 881-915 (FLSV…SATL), 918-952 (YSST…GVIP), and 953-987 (EMQS…VCPL).

Belongs to the PPR family. P subfamily.

It is found in the mitochondrion. The sequence is that of Pentatricopeptide repeat-containing protein At1g06710, mitochondrial from Arabidopsis thaliana (Mouse-ear cress).